The following is a 305-amino-acid chain: Major pollen allergen Pha a 5.2 (305 aa).

Positions 1 to 25 (MAVQKYTVALFLAVALVAGPAALYA) are cleaved as a signal peptide. The span at 65–85 (GLNEEKNAARQTDDEQKRSDE) shows a compositional bias: basic and acidic residues. Disordered stretches follow at residues 65-87 (GLNEEKNAARQTDDEQKRSDEIN) and 279-299 (STATPAAPPPPQLGTATPAAV).

This sequence belongs to the Poa p IX/Phl p VI allergen family.

The polypeptide is Major pollen allergen Pha a 5.2 (Phalaris aquatica (Canary grass)).